We begin with the raw amino-acid sequence, 108 residues long: Replication restart protein PriB (108 aa).

The region spanning 8–108 (VDNRFSLIGK…LHAEQIEFIE (101 aa)) is the SSB domain.

Belongs to the PriB family. As to quaternary structure, homodimer. Interacts with PriA and DnaT. Component of the replication restart primosome. Primosome assembly occurs via a 'hand-off' mechanism. PriA binds to replication forks, subsequently PriB then DnaT bind; DnaT then displaces ssDNA to generate the helicase loading substrate.

In terms of biological role, involved in the restart of stalled replication forks, which reloads the replicative helicase on sites other than the origin of replication; the PriA-PriB pathway is the major replication restart pathway. During primosome assembly it facilitates complex formation between PriA and DnaT on DNA; stabilizes PriA on DNA. Stimulates the DNA unwinding activity of PriA helicase. The protein is Replication restart protein PriB of Histophilus somni (strain 129Pt) (Haemophilus somnus).